A 1682-amino-acid chain; its full sequence is Collagen alpha-4(IV) chain (1682 aa).

The signal sequence occupies residues 1-32 (MRCFFRWTKSFVTAPWSLIFILFTIQYEYGSG). A 7S domain region spans residues 31 to 56 (SGKKYGGPCGGRNCSVCQCFPEKGSR). Asn-43 carries N-linked (GlcNAc...) asparagine glycosylation. Disordered regions lie at residues 56–255 (RGHP…VQPP) and 379–1453 (PGPP…FGPG). A triple-helical region region spans residues 57–1451 (GHPGPLGPQG…TGDPGPKGFG (1395 aa)). The short motif at 86–88 (RGD) is the Cell attachment site element. Residues 103–116 (PTGVPGFPGVDGVP) are compositionally biased toward low complexity. A glycan (N-linked (GlcNAc...) asparagine) is linked at Asn-134. 2 short sequence motifs (cell attachment site) span residues 137–139 (RGD) and 181–183 (RGD). The span at 396 to 410 (MGPPGPPGVPGPPGF) shows a compositional bias: pro residues. Residues 411 to 426 (PGEAGVPGRLDCAPGK) show a composition bias toward low complexity. The segment covering 487-500 (PPGPMGPPGPPGPP) has biased composition (pro residues). Residues 578–601 (DGGDGRPGERGDPGPRGDHKDAAP) show a composition bias toward basic and acidic residues. 2 consecutive short sequence motifs (cell attachment site) follow at residues 587-589 (RGD) and 593-595 (RGD). The span at 609 to 621 (LPGPPGRTGPEGP) shows a compositional bias: pro residues. Over residues 632–647 (QRGLPGEPGRPGTRGF) the composition is skewed to low complexity. An N-linked (GlcNAc...) asparagine glycan is attached at Asn-661. A compositionally biased stretch (low complexity) spans 665–682 (PGKPGLPGLDGPPGLKGF). Residues 716 to 718 (RGD) carry the Cell attachment site motif. Composition is skewed to low complexity over residues 742–758 (PGKDGQKGIPGDPAFGD) and 857–902 (PAGM…LPGL). Basic and acidic residues-rich tracts occupy residues 911–929 (ERGKPGPDGEPGRKGEVGE) and 938–950 (DLGERGAKGDRGL). The span at 969–978 (GPPGDGGFSG) shows a compositional bias: gly residues. 2 short sequence motifs (cell attachment site) span residues 980–982 (RGD) and 992–994 (RGD). The segment covering 998–1010 (DGLPGLHRGQPGI) has biased composition (low complexity). Over residues 1011-1025 (DGPPGPPGPPGPPGS) the composition is skewed to pro residues. A compositionally biased stretch (low complexity) spans 1034–1044 (FPGFPGDQGDP). Positions 1144-1146 (RGD) match the Cell attachment site motif. Pro residues-rich tracts occupy residues 1223–1235 (PGPPGRPGPPGPA), 1248–1272 (DPGPPGDRGPPGPDGPRGVPGPPGS), 1289–1304 (PGPPGSRGPPGPPGCQ), 1340–1351 (PGPPGRKGPVGP), and 1435–1444 (APGPPGPTGD). Residues 1457-1682 (GFLLVLHSQT…SRCQVCMKHS (226 aa)) form the Collagen IV NC1 domain. 6 cysteine pairs are disulfide-bonded: Cys-1472–Cys-1561, Cys-1505–Cys-1558, Cys-1517–Cys-1523, Cys-1580–Cys-1678, Cys-1614–Cys-1675, and Cys-1626–Cys-1633.

The protein belongs to the type IV collagen family. There are six type IV collagen isoforms, alpha 1(IV)-alpha 6(IV), each of which can form a triple helix structure with 2 other chains to generate type IV collagen network. The alpha 3(IV) chain forms a triple helical protomer with alpha 4(IV) and alpha 5(IV); this triple helical structure dimerizes through NC1-NC1 domain interactions such that the alpha 3(IV), alpha 4(IV) and alpha 5(IV) chains of one protomer connect with the alpha 5(IV), alpha 4(IV) and alpha 3(IV) chains of the opposite protomer, respectively. Associates with LAMB2 at the neuromuscular junction and in GBM. Post-translationally, prolines at the third position of the tripeptide repeating unit (G-X-Y) are hydroxylated in some or all of the chains. Type IV collagens contain numerous cysteine residues which are involved in inter- and intramolecular disulfide bonding. 12 of these, located in the NC1 domain, are conserved in all known type IV collagens. In terms of processing, the trimeric structure of the NC1 domains is stabilized by covalent bonds between Lys and Met residues. Expressed in Bruch's membrane, outer plexiform layer, inner nuclear layer, inner plexiform layer, ganglion cell layer, inner limiting membrane and around the blood vessels of the retina (at protein level). Highly expressed in kidney and lung. Detected at lower levels in heart, muscle and skin.

Its subcellular location is the secreted. It is found in the extracellular space. It localises to the extracellular matrix. The protein resides in the basement membrane. In terms of biological role, type IV collagen is the major structural component of glomerular basement membranes (GBM), forming a 'chicken-wire' meshwork together with laminins, proteoglycans and entactin/nidogen. The chain is Collagen alpha-4(IV) chain from Mus musculus (Mouse).